The primary structure comprises 293 residues: Ribosomal RNA small subunit methyltransferase A (293 aa).

S-adenosyl-L-methionine contacts are provided by Asn36, Leu38, Gly63, Glu84, Asp111, and Asn132.

It belongs to the class I-like SAM-binding methyltransferase superfamily. rRNA adenine N(6)-methyltransferase family. RsmA subfamily.

Its subcellular location is the cytoplasm. The enzyme catalyses adenosine(1518)/adenosine(1519) in 16S rRNA + 4 S-adenosyl-L-methionine = N(6)-dimethyladenosine(1518)/N(6)-dimethyladenosine(1519) in 16S rRNA + 4 S-adenosyl-L-homocysteine + 4 H(+). Functionally, specifically dimethylates two adjacent adenosines (A1518 and A1519) in the loop of a conserved hairpin near the 3'-end of 16S rRNA in the 30S particle. May play a critical role in biogenesis of 30S subunits. This Treponema denticola (strain ATCC 35405 / DSM 14222 / CIP 103919 / JCM 8153 / KCTC 15104) protein is Ribosomal RNA small subunit methyltransferase A.